Consider the following 355-residue polypeptide: CX3C chemokine receptor 1 (355 aa).

The Extracellular portion of the chain corresponds to 1–31; the sequence is MDQFPESVTENFEYDDLAEACYIGDIVVFGT. The chain crosses the membrane as a helical span at residues 32-59; the sequence is VFLSIFYSVIFAIGLVGNLLVVFALTNS. The Cytoplasmic segment spans residues 60–69; it reads KKPKSVTDIY. The helical transmembrane segment at 70-90 threads the bilayer; the sequence is LLNLALSDLLFVATLPFWTHY. Residues 91 to 103 are Extracellular-facing; it reads LINEKGLHNAMCK. Cys-102 and Cys-175 are disulfide-bonded. A helical transmembrane segment spans residues 104–125; that stretch reads FTTAFFFIGFFGSIFFITVISI. Over 126 to 142 the chain is Cytoplasmic; it reads DRYLAIVLAANSMNNRT. A helical transmembrane segment spans residues 143-167; the sequence is VQHGVTISLGVWAAAILVAAPQFMF. Topologically, residues 168–195 are extracellular; that stretch reads TKQKENECLGDYPEVLQEIWPVLRNVET. A helical membrane pass occupies residues 196–215; it reads NFLGFLLPLLIMSYCYFRII. Over 216–231 the chain is Cytoplasmic; sequence QTLFSCKNHKKAKAIK. A helical transmembrane segment spans residues 232 to 256; the sequence is LILLVVIVFFLFWTPYNVMIFLETL. The Extracellular portion of the chain corresponds to 257–273; the sequence is KLYDFFPSCDMRKDLRL. Residues 274–297 traverse the membrane as a helical segment; it reads ALSVTETVAFSHCCLNPLIYAFAG. Residues 298–355 are Cytoplasmic-facing; sequence EKFRRYLYHLYGKCLAVLCGRSVHVDFSSSESQRSRHGSVLSSNFTYHTSDGDALLLL. A Phosphothreonine modification is found at Thr-346.

It belongs to the G-protein coupled receptor 1 family. In terms of assembly, found in a ternary complex with CX3CL1 and ITGAV:ITGB3 or ITGA4:ITGB1. As to quaternary structure, (Microbial infection) Interacts with human respiratory syncytial virus (HRSV) protein G; this interaction modulates host immune response. (Microbial infection) Interacts with HIV-1 envelope polyprotein gp160. Post-translationally, this protein is not N-glycosylated which is unusual for G-protein-coupled receptors. In terms of tissue distribution, expressed in lymphoid and neural tissues. Expressed in lymphocyte subsets, such as natural killer (NK) cells, gamma-delta T-cells and terminally differentiated CD8(+) T-cells. Expressed in smooth muscle cells in atherosclerotic plaques.

The protein localises to the cell membrane. Its function is as follows. Receptor for the C-X3-C chemokine fractalkine (CX3CL1) present on many early leukocyte cells; CX3CR1-CX3CL1 signaling exerts distinct functions in different tissue compartments, such as immune response, inflammation, cell adhesion and chemotaxis. CX3CR1-CX3CL1 signaling mediates cell migratory functions. Responsible for the recruitment of natural killer (NK) cells to inflamed tissues. Acts as a regulator of inflammation process leading to atherogenesis by mediating macrophage and monocyte recruitment to inflamed atherosclerotic plaques, promoting cell survival. Involved in airway inflammation by promoting interleukin 2-producing T helper (Th2) cell survival in inflamed lung. Involved in the migration of circulating monocytes to non-inflamed tissues, where they differentiate into macrophages and dendritic cells. Acts as a negative regulator of angiogenesis, probably by promoting macrophage chemotaxis. Plays a key role in brain microglia by regulating inflammatory response in the central nervous system (CNS) and regulating synapse maturation. Required to restrain the microglial inflammatory response in the CNS and the resulting parenchymal damage in response to pathological stimuli. Involved in brain development by participating in synaptic pruning, a natural process during which brain microglia eliminates extra synapses during postnatal development. Synaptic pruning by microglia is required to promote the maturation of circuit connectivity during brain development. Acts as an important regulator of the gut microbiota by controlling immunity to intestinal bacteria and fungi. Expressed in lamina propria dendritic cells in the small intestine, which form transepithelial dendrites capable of taking up bacteria in order to provide defense against pathogenic bacteria. Required to initiate innate and adaptive immune responses against dissemination of commensal fungi (mycobiota) component of the gut: expressed in mononuclear phagocytes (MNPs) and acts by promoting induction of antifungal IgG antibodies response to confer protection against disseminated C.albicans or C.auris infection. Also acts as a receptor for C-C motif chemokine CCL26, inducing cell chemotaxis. Functionally, (Microbial infection) Acts as a coreceptor with CD4 for HIV-1 virus envelope protein. In terms of biological role, (Microbial infection) Acts as a coreceptor with CD4 for HIV-1 virus envelope protein. May have more potent HIV-1 coreceptothr activity than isoform 1. (Microbial infection) Acts as a coreceptor with CD4 for HIV-1 virus envelope protein. May have more potent HIV-1 coreceptor activity than isoform 1. This Homo sapiens (Human) protein is CX3C chemokine receptor 1.